Here is a 541-residue protein sequence, read N- to C-terminus: Man(5)GlcNAc(2)-PP-dolichol translocation protein RFT1 (541 aa).

Transmembrane regions (helical) follow at residues 16-36 (SGLL…AFIL), 45-62 (GIVN…TFLA), 85-105 (LLWL…WVWL), 123-143 (VLFF…WVLA), 154-176 (LAES…WLPH), 187-207 (LLYT…LLRS), 335-355 (LALL…QLAL), 376-396 (CLYV…FAAM), 414-434 (SFLV…FIMA), 470-490 (VLLG…AFLC), and 499-519 (LAHI…AFLT).

This sequence belongs to the RFT1 family.

The protein resides in the endoplasmic reticulum membrane. Its pathway is protein modification; protein glycosylation. Functionally, intramembrane glycolipid transporter that operates in the biosynthetic pathway of dolichol-linked oligosaccharides, the glycan precursors employed in protein asparagine (N)-glycosylation. The sequential addition of sugars to dolichol pyrophosphate produces dolichol-linked oligosaccharides containing fourteen sugars, including two GlcNAcs, nine mannoses and three glucoses. Once assembled, the oligosaccharide is transferred from the lipid to nascent proteins by oligosaccharyltransferases. The assembly of dolichol-linked oligosaccharides begins on the cytosolic side of the endoplasmic reticulum membrane and finishes in its lumen. RFT1 could mediate the translocation of the cytosolically oriented intermediate DolPP-GlcNAc2Man5, produced by ALG11, into the ER lumen where dolichol-linked oligosaccharides assembly continues. However, the intramembrane lipid transporter activity could not be confirmed in vitro. This chain is Man(5)GlcNAc(2)-PP-dolichol translocation protein RFT1, found in Mus musculus (Mouse).